The sequence spans 271 residues: Shikimate dehydrogenase-like protein HI_0607 (271 aa).

The active-site Proton donor/acceptor is K67. D103 lines the substrate pocket. Residues 126-130 (GSGGM), K154, and S184 each bind NADP(+).

It belongs to the shikimate dehydrogenase-like family. Homodimer.

It carries out the reaction shikimate + NADP(+) = 3-dehydroshikimate + NADPH + H(+). Functionally, in vitro, is able to catalyze the NADP(+)-dependent oxidation of shikimate to 3-dehydroshikimate. However, has much lower activity than classical shikimate dehydrogenases AroE, indicating that shikimate may not be the biological substrate. Cannot utilize NAD(+) instead of NADP(+). Is not able to catalyze the oxidation of quinate. The sequence is that of Shikimate dehydrogenase-like protein HI_0607 from Haemophilus influenzae (strain ATCC 51907 / DSM 11121 / KW20 / Rd).